Consider the following 181-residue polypeptide: High mobility group protein B4 (181 aa).

The segment at residues 9–79 is a DNA-binding region (HMG box 1); that stretch reads PKVNVSSYIH…RYQQEMMNYI (71 aa). Residues 80-89 show a composition bias toward basic residues; it reads GKRRKRRKRD. The interval 80 to 100 is disordered; it reads GKRRKRRKRDPKAPRKPPSSF. Positions 93-161 form a DNA-binding region, HMG box 2; sequence PRKPPSSFLL…KYFEEQEAYR (69 aa).

It belongs to the HMGB family. Expressed in adult germ cells (at protein level).

The protein localises to the nucleus. The protein resides in the chromosome. The polypeptide is High mobility group protein B4 (Hmgb4) (Mus musculus (Mouse)).